The sequence spans 404 residues: Serine palmitoyltransferase (404 aa).

Residues 112–113 (GY), Ser185, His213, and Thr241 each bind pyridoxal 5'-phosphate. An N6-(pyridoxal phosphate)lysine modification is found at Lys244.

Belongs to the class-II pyridoxal-phosphate-dependent aminotransferase family. It depends on pyridoxal 5'-phosphate as a cofactor.

Its subcellular location is the cytoplasm. It catalyses the reaction L-serine + hexadecanoyl-CoA + H(+) = 3-oxosphinganine + CO2 + CoA. It participates in lipid metabolism; sphingolipid metabolism. Its function is as follows. Involved in de novo bacterial ceramide synthesis. Catalyzes the condensation of L-serine with palmitoyl-CoA (hexadecanoyl-CoA) to produce 3-oxosphinganine. Can also condense serine and C16:1-CoA, but shows a preference for palmitoyl-CoA. The chain is Serine palmitoyltransferase from Caulobacter vibrioides (strain NA1000 / CB15N) (Caulobacter crescentus).